We begin with the raw amino-acid sequence, 156 residues long: Ribosomal RNA large subunit methyltransferase H (156 aa).

S-adenosyl-L-methionine contacts are provided by residues Leu-73, Gly-104, and Leu-123–Leu-128.

This sequence belongs to the RNA methyltransferase RlmH family. As to quaternary structure, homodimer.

It localises to the cytoplasm. The catalysed reaction is pseudouridine(1915) in 23S rRNA + S-adenosyl-L-methionine = N(3)-methylpseudouridine(1915) in 23S rRNA + S-adenosyl-L-homocysteine + H(+). Specifically methylates the pseudouridine at position 1915 (m3Psi1915) in 23S rRNA. The protein is Ribosomal RNA large subunit methyltransferase H of Shewanella loihica (strain ATCC BAA-1088 / PV-4).